Reading from the N-terminus, the 352-residue chain is Biotin synthase (352 aa).

The region spanning 44-262 (NRVQVSTLLS…LAVARILMPK (219 aa)) is the Radical SAM core domain. The [4Fe-4S] cluster site is built by cysteine 59, cysteine 63, and cysteine 66. Positions 103, 134, 194, and 266 each coordinate [2Fe-2S] cluster.

It belongs to the radical SAM superfamily. Biotin synthase family. As to quaternary structure, homodimer. [4Fe-4S] cluster serves as cofactor. [2Fe-2S] cluster is required as a cofactor.

The catalysed reaction is (4R,5S)-dethiobiotin + (sulfur carrier)-SH + 2 reduced [2Fe-2S]-[ferredoxin] + 2 S-adenosyl-L-methionine = (sulfur carrier)-H + biotin + 2 5'-deoxyadenosine + 2 L-methionine + 2 oxidized [2Fe-2S]-[ferredoxin]. It participates in cofactor biosynthesis; biotin biosynthesis; biotin from 7,8-diaminononanoate: step 2/2. Catalyzes the conversion of dethiobiotin (DTB) to biotin by the insertion of a sulfur atom into dethiobiotin via a radical-based mechanism. The chain is Biotin synthase from Pseudomonas entomophila (strain L48).